The sequence spans 139 residues: Large ribosomal subunit protein bL9m (139 aa).

Residues 83–121 (DHQQLSKRHETEVQKNMELRKESVFGHKKEEKPKEEKKG) are disordered.

It belongs to the bacterial ribosomal protein bL9 family. As to quaternary structure, component of the mitochondrial large ribosomal subunit (mt-LSU). Mature yeast 74S mitochondrial ribosomes consist of a small (37S) and a large (54S) subunit. The 37S small subunit contains a 15S ribosomal RNA (15S mt-rRNA) and 34 different proteins. The 54S large subunit contains a 21S rRNA (21S mt-rRNA) and 46 different proteins.

The protein localises to the mitochondrion. In terms of biological role, component of the mitochondrial ribosome (mitoribosome), a dedicated translation machinery responsible for the synthesis of mitochondrial genome-encoded proteins, including at least some of the essential transmembrane subunits of the mitochondrial respiratory chain. The mitoribosomes are attached to the mitochondrial inner membrane and translation products are cotranslationally integrated into the membrane. This Saccharomyces cerevisiae (strain ATCC 204508 / S288c) (Baker's yeast) protein is Large ribosomal subunit protein bL9m (MRPL50).